A 346-amino-acid chain; its full sequence is Phosphate acyltransferase (346 aa).

It belongs to the PlsX family. Homodimer. Probably interacts with PlsY.

It is found in the cytoplasm. The catalysed reaction is a fatty acyl-[ACP] + phosphate = an acyl phosphate + holo-[ACP]. Its pathway is lipid metabolism; phospholipid metabolism. Catalyzes the reversible formation of acyl-phosphate (acyl-PO(4)) from acyl-[acyl-carrier-protein] (acyl-ACP). This enzyme utilizes acyl-ACP as fatty acyl donor, but not acyl-CoA. The sequence is that of Phosphate acyltransferase from Synechococcus elongatus (strain ATCC 33912 / PCC 7942 / FACHB-805) (Anacystis nidulans R2).